We begin with the raw amino-acid sequence, 304 residues long: Tyrosine recombinase XerD (304 aa).

Positions Met-1–Leu-92 constitute a Core-binding (CB) domain. The 186-residue stretch at His-113–Arg-298 folds into the Tyr recombinase domain. Residues Arg-156, Lys-180, His-250, Arg-253, and His-276 contribute to the active site. Tyr-285 (O-(3'-phospho-DNA)-tyrosine intermediate) is an active-site residue.

The protein belongs to the 'phage' integrase family. XerD subfamily. Forms a cyclic heterotetrameric complex composed of two molecules of XerC and two molecules of XerD.

The protein localises to the cytoplasm. Functionally, site-specific tyrosine recombinase, which acts by catalyzing the cutting and rejoining of the recombining DNA molecules. The XerC-XerD complex is essential to convert dimers of the bacterial chromosome into monomers to permit their segregation at cell division. It also contributes to the segregational stability of plasmids. This chain is Tyrosine recombinase XerD, found in Corynebacterium glutamicum (strain ATCC 13032 / DSM 20300 / JCM 1318 / BCRC 11384 / CCUG 27702 / LMG 3730 / NBRC 12168 / NCIMB 10025 / NRRL B-2784 / 534).